The sequence spans 360 residues: Uroporphyrinogen decarboxylase (360 aa).

Substrate contacts are provided by residues 31–35, Asp-81, Tyr-157, Thr-212, and His-333; that span reads RQAGR.

The protein belongs to the uroporphyrinogen decarboxylase family. In terms of assembly, homodimer.

The protein resides in the cytoplasm. It carries out the reaction uroporphyrinogen III + 4 H(+) = coproporphyrinogen III + 4 CO2. It functions in the pathway porphyrin-containing compound metabolism; protoporphyrin-IX biosynthesis; coproporphyrinogen-III from 5-aminolevulinate: step 4/4. Functionally, catalyzes the decarboxylation of four acetate groups of uroporphyrinogen-III to yield coproporphyrinogen-III. The sequence is that of Uroporphyrinogen decarboxylase from Janthinobacterium sp. (strain Marseille) (Minibacterium massiliensis).